A 618-amino-acid chain; its full sequence is Baculoviral IAP repeat-containing protein 2 (618 aa).

BIR repeat units lie at residues 46–113 (ELYR…CSFI), 184–250 (EEAR…CPFL), and 269–336 (HAAR…CEFL). Zn(2+) is bound by residues Cys-306, Cys-309, His-326, and Cys-333. Residues 453–543 (MASDDLSLIR…TLYKNLFVDK (91 aa)) form the CARD domain. Residues 571-606 (CKVCMDKEVSVVFIPCGHLVVCQECAPSLRKCPICR) form an RING-type zinc finger.

It belongs to the IAP family. Interacts with DIABLO/SMAC and with PRSS25; these interactions inhibit apoptotic suppressor activity. Interacts with CASP9. Interacts (via BIR domains) with TRAF2; the interaction is required for IKBKE ubiquitination. Interacts with E2F1, RIPK1, RIPK2, RIPK3, RIPK4, BIRC5/survivin and USP19. HSP90AB1. Interacts with UBXN1. Interacts with GSK3B. Interacts with several death receptors, inclusing FAS, TNFRSF10A and TNFRSF10B. Recruited to TNFRSF10B in the absence of receptor stimulation. When TNFRSF10B is stimulated, further recruited to the receptor and cleaved by caspases. Proteolytic fragments remain associated with TNFRSF10B. In terms of processing, auto-ubiquitinated and degraded by the proteasome in apoptotic cells. Post-translationally, upon stimulation of death receptors, including TNFRSF10B, recruited to receptors and cleaved by caspases. Proteolytic fragments remain associated with the receptors. This cleavage presumably inactivates the protein. Present in many fetal and adult tissues. Mainly expressed in adult skeletal muscle, thymus, testis, ovary, and pancreas, low or absent in brain and peripheral blood leukocytes.

Its subcellular location is the cytoplasm. It is found in the nucleus. The catalysed reaction is S-ubiquitinyl-[E2 ubiquitin-conjugating enzyme]-L-cysteine + [acceptor protein]-L-lysine = [E2 ubiquitin-conjugating enzyme]-L-cysteine + N(6)-ubiquitinyl-[acceptor protein]-L-lysine.. With respect to regulation, the CARD domain inhibits the activation of E3 ubiquitin ligase activity by preventing RING domain dimerization and E2 ubiquitin donor binding and activation. The CARD domain-mediated autoinhibition of the E3 ubiquitin-protein ligase activity suppresses cell proliferation and migration. USP19 regulates the stability of BIRC2/c-IAP1 by preventing its ubiquitination. In terms of biological role, multi-functional protein which regulates not only caspases and apoptosis, but also modulates inflammatory signaling and immunity, mitogenic kinase signaling, and cell proliferation, as well as cell invasion and metastasis. Acts as an E3 ubiquitin-protein ligase regulating NF-kappa-B signaling and regulates both canonical and non-canonical NF-kappa-B signaling by acting in opposite directions: acts as a positive regulator of the canonical pathway and suppresses constitutive activation of non-canonical NF-kappa-B signaling. The target proteins for its E3 ubiquitin-protein ligase activity include: RIPK1, RIPK2, RIPK3, RIPK4, CASP3, CASP7, CASP8, TRAF2, DIABLO/SMAC, MAP3K14/NIK, MAP3K5/ASK1, IKBKG/NEMO, IKBKE and MXD1/MAD1. Can also function as an E3 ubiquitin-protein ligase of the NEDD8 conjugation pathway, targeting effector caspases for neddylation and inactivation. Acts as an important regulator of innate immune signaling via regulation of Toll-like receptors (TLRs), Nodlike receptors (NLRs) and RIG-I like receptors (RLRs), collectively referred to as pattern recognition receptors (PRRs). Protects cells from spontaneous formation of the ripoptosome, a large multi-protein complex that has the capability to kill cancer cells in a caspase-dependent and caspase-independent manner. Suppresses ripoptosome formation by ubiquitinating RIPK1 and CASP8. Can stimulate the transcriptional activity of E2F1. Plays a role in the modulation of the cell cycle. The protein is Baculoviral IAP repeat-containing protein 2 (BIRC2) of Homo sapiens (Human).